The sequence spans 310 residues: Transcription factor MYB53 (310 aa).

HTH myb-type domains lie at 9 to 61 (ETGL…TNYL) and 62 to 116 (RPDI…KKKL). 2 consecutive DNA-binding regions (H-T-H motif) follow at residues 37–61 (WSALPKLAGLNRCGKSCRLRWTNYL) and 89–112 (WSMIASHLPGRTDNEIKNFWNTHL).

Interacts with FBX5. Highly expressed in roots and at lower levels in leaves, stems and flowers.

The protein localises to the nucleus. In terms of biological role, probable transcription factor. This Arabidopsis thaliana (Mouse-ear cress) protein is Transcription factor MYB53.